We begin with the raw amino-acid sequence, 358 residues long: Methylthioribose-1-phosphate isomerase (358 aa).

Residues 54 to 56 (RGA), R96, and Q205 each bind substrate. D246 acts as the Proton donor in catalysis. Residue 256–257 (AK) coordinates substrate.

This sequence belongs to the eIF-2B alpha/beta/delta subunits family. MtnA subfamily.

It carries out the reaction 5-(methylsulfanyl)-alpha-D-ribose 1-phosphate = 5-(methylsulfanyl)-D-ribulose 1-phosphate. The protein operates within amino-acid biosynthesis; L-methionine biosynthesis via salvage pathway; L-methionine from S-methyl-5-thio-alpha-D-ribose 1-phosphate: step 1/6. Its function is as follows. Catalyzes the interconversion of methylthioribose-1-phosphate (MTR-1-P) into methylthioribulose-1-phosphate (MTRu-1-P). This is Methylthioribose-1-phosphate isomerase from Pseudomonas entomophila (strain L48).